A 258-amino-acid chain; its full sequence is Snake venom serine protease 1 (258 aa).

A signal peptide spans 1 to 18 (MVLIRVLANLLILQLSYA). Positions 19–24 (QKSSEL) are excised as a propeptide. In terms of domain architecture, Peptidase S1 spans 25–249 (VVGGDECNIN…YNDWIKSIIA (225 aa)). Disulfide bonds link Cys31–Cys163, Cys50–Cys66, Cys98–Cys256, Cys142–Cys210, Cys174–Cys189, and Cys200–Cys225. Residue Asn44 is glycosylated (N-linked (GlcNAc...) asparagine). Catalysis depends on charge relay system residues His65 and Asp110. Ser204 serves as the catalytic Charge relay system.

This sequence belongs to the peptidase S1 family. Snake venom subfamily. Monomer. Expressed by the venom gland.

The protein resides in the secreted. Snake venom serine protease that may act in the hemostasis system of the prey. In Craspedocephalus gramineus (Bamboo pit viper), this protein is Snake venom serine protease 1 (TLG1).